The primary structure comprises 404 residues: Tryptophan synthase beta chain (404 aa).

Lys-98 is modified (N6-(pyridoxal phosphate)lysine).

This sequence belongs to the TrpB family. In terms of assembly, tetramer of two alpha and two beta chains. Pyridoxal 5'-phosphate serves as cofactor.

It carries out the reaction (1S,2R)-1-C-(indol-3-yl)glycerol 3-phosphate + L-serine = D-glyceraldehyde 3-phosphate + L-tryptophan + H2O. Its pathway is amino-acid biosynthesis; L-tryptophan biosynthesis; L-tryptophan from chorismate: step 5/5. Functionally, the beta subunit is responsible for the synthesis of L-tryptophan from indole and L-serine. The protein is Tryptophan synthase beta chain of Rhodopseudomonas palustris (strain BisA53).